We begin with the raw amino-acid sequence, 162 residues long: NADH-quinone oxidoreductase subunit C (162 aa).

The protein belongs to the complex I 30 kDa subunit family. As to quaternary structure, NDH-1 is composed of 14 different subunits. Subunits NuoB, C, D, E, F, and G constitute the peripheral sector of the complex.

The protein localises to the cell inner membrane. It carries out the reaction a quinone + NADH + 5 H(+)(in) = a quinol + NAD(+) + 4 H(+)(out). Its function is as follows. NDH-1 shuttles electrons from NADH, via FMN and iron-sulfur (Fe-S) centers, to quinones in the respiratory chain. The immediate electron acceptor for the enzyme in this species is believed to be ubiquinone. Couples the redox reaction to proton translocation (for every two electrons transferred, four hydrogen ions are translocated across the cytoplasmic membrane), and thus conserves the redox energy in a proton gradient. The sequence is that of NADH-quinone oxidoreductase subunit C from Geobacter sulfurreducens (strain ATCC 51573 / DSM 12127 / PCA).